Here is a 283-residue protein sequence, read N- to C-terminus: NAD kinase (283 aa).

D66 acts as the Proton acceptor in catalysis. Residues 66 to 67, 134 to 135, R145, R163, D165, and 176 to 181 each bind NAD(+); these read DG, ND, and TAYSMS.

It belongs to the NAD kinase family. The cofactor is a divalent metal cation.

The protein resides in the cytoplasm. It catalyses the reaction NAD(+) + ATP = ADP + NADP(+) + H(+). Its function is as follows. Involved in the regulation of the intracellular balance of NAD and NADP, and is a key enzyme in the biosynthesis of NADP. Catalyzes specifically the phosphorylation on 2'-hydroxyl of the adenosine moiety of NAD to yield NADP. The polypeptide is NAD kinase (Chlorobaculum tepidum (strain ATCC 49652 / DSM 12025 / NBRC 103806 / TLS) (Chlorobium tepidum)).